A 296-amino-acid polypeptide reads, in one-letter code: tRNA dimethylallyltransferase (296 aa).

8–15 (GPTGSGKT) is an ATP binding site. 10–15 (TGSGKT) contributes to the substrate binding site. The interval 32-35 (DSRQ) is interaction with substrate tRNA.

It belongs to the IPP transferase family. As to quaternary structure, monomer. Mg(2+) is required as a cofactor.

The catalysed reaction is adenosine(37) in tRNA + dimethylallyl diphosphate = N(6)-dimethylallyladenosine(37) in tRNA + diphosphate. Functionally, catalyzes the transfer of a dimethylallyl group onto the adenine at position 37 in tRNAs that read codons beginning with uridine, leading to the formation of N6-(dimethylallyl)adenosine (i(6)A). The polypeptide is tRNA dimethylallyltransferase (Leptospira biflexa serovar Patoc (strain Patoc 1 / Ames)).